Here is a 94-residue protein sequence, read N- to C-terminus: Small ribosomal subunit protein bS6 (94 aa).

The protein belongs to the bacterial ribosomal protein bS6 family.

In terms of biological role, binds together with bS18 to 16S ribosomal RNA. This Clostridium botulinum (strain Loch Maree / Type A3) protein is Small ribosomal subunit protein bS6.